We begin with the raw amino-acid sequence, 123 residues long: Small ribosomal subunit protein uS13 (123 aa).

Positions 97–123 are disordered; sequence PVRGQKTKTNARTRKGPKKTVGRKKKK. Over residues 101 to 123 the composition is skewed to basic residues; the sequence is QKTKTNARTRKGPKKTVGRKKKK.

Belongs to the universal ribosomal protein uS13 family. As to quaternary structure, part of the 30S ribosomal subunit. Forms a loose heterodimer with protein S19. Forms two bridges to the 50S subunit in the 70S ribosome.

Its function is as follows. Located at the top of the head of the 30S subunit, it contacts several helices of the 16S rRNA. In the 70S ribosome it contacts the 23S rRNA (bridge B1a) and protein L5 of the 50S subunit (bridge B1b), connecting the 2 subunits; these bridges are implicated in subunit movement. Contacts the tRNAs in the A and P-sites. This chain is Small ribosomal subunit protein uS13, found in Alkaliphilus oremlandii (strain OhILAs) (Clostridium oremlandii (strain OhILAs)).